The sequence spans 571 residues: Proline--tRNA ligase (571 aa).

The protein belongs to the class-II aminoacyl-tRNA synthetase family. ProS type 1 subfamily. As to quaternary structure, homodimer.

It is found in the cytoplasm. The catalysed reaction is tRNA(Pro) + L-proline + ATP = L-prolyl-tRNA(Pro) + AMP + diphosphate. Functionally, catalyzes the attachment of proline to tRNA(Pro) in a two-step reaction: proline is first activated by ATP to form Pro-AMP and then transferred to the acceptor end of tRNA(Pro). As ProRS can inadvertently accommodate and process non-cognate amino acids such as alanine and cysteine, to avoid such errors it has two additional distinct editing activities against alanine. One activity is designated as 'pretransfer' editing and involves the tRNA(Pro)-independent hydrolysis of activated Ala-AMP. The other activity is designated 'posttransfer' editing and involves deacylation of mischarged Ala-tRNA(Pro). The misacylated Cys-tRNA(Pro) is not edited by ProRS. The polypeptide is Proline--tRNA ligase (Pseudomonas putida (strain ATCC 47054 / DSM 6125 / CFBP 8728 / NCIMB 11950 / KT2440)).